Here is a 348-residue protein sequence, read N- to C-terminus: MDLELEPTLESIVQHDSLKWIFVGGKGGVGKTTTSSSVAVQLALAQPNEQFLLISTDPAHNLSDAFCQKFGKDARKVEGLPNLSCMEIDPEAAMSDLQQQASQYNNDPNDPLKSMMSDMTGSIPGIDEALSFMEVLKHIKNQKVLEGEDNSNAISYKTIIFDTAPTGHTLRFLQLPSTLEKLLSKFKDLSGKLGPMLSMMGGGQQQDIFEKLNEVQKNVSEVNEQFTNPELTTFICVCISEFLSLYETERMIQELMSYNMDVNSIVVNQLLFAEGDDHSCKRCESRWKMQKKYLDQMGELYEDYHLVKMPLLGCEIRGVENLKKFSKFLLKPYDPKADSDIVFDLEEK.

An ATP-binding site is contributed by Lys-26–Thr-33. Residue Asp-57 is part of the active site. Residues Glu-241 and Asn-268 each contribute to the ATP site. Zn(2+) is bound by residues Cys-280 and Cys-283. Pro-310–Leu-312 is an ATP binding site.

The protein belongs to the arsA ATPase family. Homodimer. Component of the Golgi to ER traffic (GET) complex, which is composed of GET1, GET2 and GET3. Within the complex, GET1 and GET2 form a heterotetramer which is stabilized by phosphatidylinositol binding and which binds to the GET3 homodimer. Interacts with the chloride channel protein GEF1.

The protein localises to the cytoplasm. It localises to the endoplasmic reticulum. The protein resides in the golgi apparatus. Its function is as follows. ATPase required for the post-translational delivery of tail-anchored (TA) proteins to the endoplasmic reticulum. Recognizes and selectively binds the transmembrane domain of TA proteins in the cytosol. This complex then targets to the endoplasmic reticulum by membrane-bound receptors GET1 and GET2, where the tail-anchored protein is released for insertion. This process is regulated by ATP binding and hydrolysis. ATP binding drives the homodimer towards the closed dimer state, facilitating recognition of newly synthesized TA membrane proteins. ATP hydrolysis is required for insertion. Subsequently, the homodimer reverts towards the open dimer state, lowering its affinity for the GET1-GET2 receptor, and returning it to the cytosol to initiate a new round of targeting. Cooperates with the HDEL receptor ERD2 to mediate the ATP-dependent retrieval of resident ER proteins that contain a C-terminal H-D-E-L retention signal from the Golgi to the ER. Involved in low-level resistance to the oxyanions arsenite and arsenate, and in heat tolerance. The protein is ATPase GET3 of Debaryomyces hansenii (strain ATCC 36239 / CBS 767 / BCRC 21394 / JCM 1990 / NBRC 0083 / IGC 2968) (Yeast).